A 664-amino-acid chain; its full sequence is UvrABC system protein B (664 aa).

The Helicase ATP-binding domain maps to 23-412; sequence EGLNRGMRFQ…VVEQIIRPTG (390 aa). Residue 36–43 coordinates ATP; sequence GVTGSGKT. The Beta-hairpin motif lies at 89–112; it reads YYDYYQPEAYIPTKDLYIEKNADI. The Helicase C-terminal domain maps to 429-588; it reads DLVNEIVKVK…ITPRSVIKPL (160 aa). Residues 622-657 form the UVR domain; sequence EEYMAVLEEEMYRAASELRYEDAAALRDELFRIREE.

Belongs to the UvrB family. As to quaternary structure, forms a heterotetramer with UvrA during the search for lesions. Interacts with UvrC in an incision complex.

Its subcellular location is the cytoplasm. In terms of biological role, the UvrABC repair system catalyzes the recognition and processing of DNA lesions. A damage recognition complex composed of 2 UvrA and 2 UvrB subunits scans DNA for abnormalities. Upon binding of the UvrA(2)B(2) complex to a putative damaged site, the DNA wraps around one UvrB monomer. DNA wrap is dependent on ATP binding by UvrB and probably causes local melting of the DNA helix, facilitating insertion of UvrB beta-hairpin between the DNA strands. Then UvrB probes one DNA strand for the presence of a lesion. If a lesion is found the UvrA subunits dissociate and the UvrB-DNA preincision complex is formed. This complex is subsequently bound by UvrC and the second UvrB is released. If no lesion is found, the DNA wraps around the other UvrB subunit that will check the other stand for damage. The chain is UvrABC system protein B from Thermotoga maritima (strain ATCC 43589 / DSM 3109 / JCM 10099 / NBRC 100826 / MSB8).